Consider the following 80-residue polypeptide: Putative ankyrin repeat protein RC0877 (80 aa).

Residues 6–46 (SGGIPLHAVAKNVRCTSKDIKDYEIYKLLVSYGADINARVE) form an ANK repeat.

This is Putative ankyrin repeat protein RC0877 from Rickettsia conorii (strain ATCC VR-613 / Malish 7).